We begin with the raw amino-acid sequence, 408 residues long: NADH-quinone oxidoreductase subunit D (408 aa).

It belongs to the complex I 49 kDa subunit family. In terms of assembly, NDH-1 is composed of 14 different subunits. Subunits NuoB, C, D, E, F, and G constitute the peripheral sector of the complex.

The protein resides in the cell inner membrane. It carries out the reaction a quinone + NADH + 5 H(+)(in) = a quinol + NAD(+) + 4 H(+)(out). NDH-1 shuttles electrons from NADH, via FMN and iron-sulfur (Fe-S) centers, to quinones in the respiratory chain. The immediate electron acceptor for the enzyme in this species is believed to be ubiquinone. Couples the redox reaction to proton translocation (for every two electrons transferred, four hydrogen ions are translocated across the cytoplasmic membrane), and thus conserves the redox energy in a proton gradient. The chain is NADH-quinone oxidoreductase subunit D from Campylobacter jejuni subsp. doylei (strain ATCC BAA-1458 / RM4099 / 269.97).